The primary structure comprises 171 residues: Small ribosomal subunit protein uS4 (171 aa).

The S4 RNA-binding domain maps to 104–168 (RRLQTIVYKK…SPFKERAEEA (65 aa)).

This sequence belongs to the universal ribosomal protein uS4 family. In terms of assembly, part of the 30S ribosomal subunit. Contacts protein S5. The interaction surface between S4 and S5 is involved in control of translational fidelity.

One of the primary rRNA binding proteins, it binds directly to 16S rRNA where it nucleates assembly of the body of the 30S subunit. Its function is as follows. With S5 and S12 plays an important role in translational accuracy. This Aeropyrum pernix (strain ATCC 700893 / DSM 11879 / JCM 9820 / NBRC 100138 / K1) protein is Small ribosomal subunit protein uS4.